The chain runs to 165 residues: Probable chemoreceptor glutamine deamidase CheD (165 aa).

The protein belongs to the CheD family.

The catalysed reaction is L-glutaminyl-[protein] + H2O = L-glutamyl-[protein] + NH4(+). Probably deamidates glutamine residues to glutamate on methyl-accepting chemotaxis receptors (MCPs), playing an important role in chemotaxis. The chain is Probable chemoreceptor glutamine deamidase CheD from Clostridium tetani (strain Massachusetts / E88).